We begin with the raw amino-acid sequence, 150 residues long: Small ribosomal subunit protein eS19 (150 aa).

This sequence belongs to the eukaryotic ribosomal protein eS19 family. Part of the 30S ribosomal subunit.

Functionally, may be involved in maturation of the 30S ribosomal subunit. In Thermoplasma acidophilum (strain ATCC 25905 / DSM 1728 / JCM 9062 / NBRC 15155 / AMRC-C165), this protein is Small ribosomal subunit protein eS19.